A 711-amino-acid chain; its full sequence is Polyribonucleotide nucleotidyltransferase (711 aa).

Asp-486 and Asp-492 together coordinate Mg(2+). Positions 553–612 (PRIHTIKINPDKIKDVIGKGGSVIRALTEETGTTIEIEDDGTVKIAATDGDKAQHAIRRI) constitute a KH domain. An S1 motif domain is found at 622–690 (GRIYNGKVTR…RQGRVRLSIK (69 aa)). The tract at residues 689 to 711 (IKEATEQTPSAAAPEAPAAEQGE) is disordered. Over residues 694–711 (EQTPSAAAPEAPAAEQGE) the composition is skewed to low complexity.

This sequence belongs to the polyribonucleotide nucleotidyltransferase family. Component of the RNA degradosome, which is a multiprotein complex involved in RNA processing and mRNA degradation. The cofactor is Mg(2+).

It is found in the cytoplasm. The enzyme catalyses RNA(n+1) + phosphate = RNA(n) + a ribonucleoside 5'-diphosphate. Its function is as follows. Involved in mRNA degradation. Catalyzes the phosphorolysis of single-stranded polyribonucleotides processively in the 3'- to 5'-direction. In Klebsiella pneumoniae subsp. pneumoniae (strain ATCC 700721 / MGH 78578), this protein is Polyribonucleotide nucleotidyltransferase.